Reading from the N-terminus, the 311-residue chain is Ribosomal RNA small subunit methyltransferase H (311 aa).

S-adenosyl-L-methionine contacts are provided by residues 34–36, Asp54, Phe80, Asp104, and Gln111; that span reads GGH.

Belongs to the methyltransferase superfamily. RsmH family.

It localises to the cytoplasm. It carries out the reaction cytidine(1402) in 16S rRNA + S-adenosyl-L-methionine = N(4)-methylcytidine(1402) in 16S rRNA + S-adenosyl-L-homocysteine + H(+). Functionally, specifically methylates the N4 position of cytidine in position 1402 (C1402) of 16S rRNA. In Teredinibacter turnerae (strain ATCC 39867 / T7901), this protein is Ribosomal RNA small subunit methyltransferase H.